The chain runs to 294 residues: tRNA dimethylallyltransferase (294 aa).

ATP is bound at residue 10-17 (GPTAVGKT). 12 to 17 (TAVGKT) is a substrate binding site. Residues 35–38 (DSQQ) form an interaction with substrate tRNA region.

This sequence belongs to the IPP transferase family. In terms of assembly, monomer. Mg(2+) serves as cofactor.

It catalyses the reaction adenosine(37) in tRNA + dimethylallyl diphosphate = N(6)-dimethylallyladenosine(37) in tRNA + diphosphate. Functionally, catalyzes the transfer of a dimethylallyl group onto the adenine at position 37 in tRNAs that read codons beginning with uridine, leading to the formation of N6-(dimethylallyl)adenosine (i(6)A). This Streptococcus gordonii (strain Challis / ATCC 35105 / BCRC 15272 / CH1 / DL1 / V288) protein is tRNA dimethylallyltransferase.